The following is a 268-amino-acid chain: MVLKFSVSILWIQLAWVSTQLLEQSPQFLSIQEGENLTVYCNSSSVFSSLQWYRQEPGEGPVLLVTVVTGGEVKKLKRLTFQFGDARKDSSLHITAAQPGDTGLYLCAGGGSQGNLIFGKGTKLSVKPIQNPDPAVYQLRDSKSSDKSVCLFTDFDSQTNVSQSKDSDVYITDKTVLDMRSMDFKSNSAVAWSNKSDFACANAFNNSIIPEDTFFPSPESSCDVKLVEKSFETDTNLNFQNLSVIGFRILLLKVAGFNLLMTLRLWSS.

The N-terminal stretch at M1–T19 is a signal peptide. The Ig-like V-type domain occupies Q20–C107. Positions Q20–G109 are t cell receptor alpha variable 27. 2 N-linked (GlcNAc...) asparagine glycosylation sites follow: N36 and N42. C41 and C107 form a disulfide bridge. Residues S45–S49 form a CDR1 region. The interval V67 to T69 is CDR2. Residues C107–F118 form a CDR3 region. Residues G110–P128 form a t cell receptor alpha joining 42 region. Residues I129 to S268 form a t cell receptor alpha constant region. In terms of domain architecture, Ig-like C1-type spans K147 to T235. The cysteines at positions 150 and 200 are disulfide-linked. N160, N194, N205, and N241 each carry an N-linked (GlcNAc...) asparagine glycan. A connecting peptide region spans residues C222–S243. Residues V244–W266 traverse the membrane as a helical segment. Over S267–S268 the chain is Cytoplasmic.

Disulfide-linked heterodimer with TRBV19*01J2S7*01C*02 beta chain. The TR primarily interacts via its CDR3-beta domain with M/matrix protein 1-derived peptide (GILGFVFTL) displayed by HLA-A*02.01 in a 'peg-notch' recognition mode. The alpha-beta TR associates with the transmembrane signaling CD3 coreceptor proteins to form the TR-CD3 (TCR). The assembly of alpha-beta TR heterodimers with CD3 occurs in the endoplasmic reticulum where a single alpha-beta TR heterodimer associates with one CD3D-CD3E heterodimer, one CD3G-CD3E heterodimer and one CD247 homodimer forming a stable octameric structure. CD3D-CD3E and CD3G-CD3E heterodimers preferentially associate with TR alpha and TR beta chains (via TM domain), respectively. The association of the CD247 homodimer is the last step of TCR assembly in the endoplasmic reticulum and is required for transport to the cell surface. Expressed in M/matrix protein 1-specific effector and memory CD8-positive T cells readily detectable in the peripheral blood, secondary lymphoid organs and lung (primary site of infection) of IAV infected individuals.

It localises to the cell membrane. The alpha chain of TRAV27*01J42*01C*01/TRBV19*01J2S7*01C*02 alpha-beta T cell receptor (TR) clonotype that is specific for HLA-A*02:01-restricted M/matrix protein 1 immunodominant epitope GILGFVFTL of influenza A virus (IAV). Classified as a public TR clonotype, it is preferentially selected in effector memory CD8-positive T cells among multiple HLA-A*02:01 carriers and confers long-lived immunity against IAV infection. Can cross-recognize sporadically emerging IAV variants by molecular mimicry, inducing immunity toward different influenza strains. Antigen recognition initiates TR-CD3 clustering on the cell surface and intracellular activation of LCK that phosphorylates the ITAM motifs of CD3G, CD3D, CD3E and CD247 enabling the recruitment of ZAP70. In turn, ZAP70 phosphorylates LAT, which recruits numerous signaling molecules to form the LAT signalosome. The LAT signalosome propagates signal branching to three major signaling pathways, the calcium, the mitogen-activated protein kinase (MAPK) kinase and the nuclear factor NF-kappa-B (NF-kB) pathways, leading to the mobilization of transcription factors that are critical for gene expression and essential for T cell differentiation into effector/memory T cells. In Homo sapiens (Human), this protein is M1-specific T cell receptor alpha chain.